The sequence spans 344 residues: Mycothiol acetyltransferase (344 aa).

E36 is a 1D-myo-inositol 2-(L-cysteinylamino)-2-deoxy-alpha-D-glucopyranoside binding site. N-acetyltransferase domains follow at residues 40–179 (LALR…TPLP) and 187–344 (VTVR…PSTG). The segment at 61 to 83 (ADTSGPNVPDTPGDQNAADTSTM) is disordered. Residues 73–83 (GDQNAADTSTM) show a composition bias toward polar residues. 109–111 (VVV) contacts acetyl-CoA. 3 residues coordinate 1D-myo-inositol 2-(L-cysteinylamino)-2-deoxy-alpha-D-glucopyranoside: E214, K253, and E272. Acetyl-CoA contacts are provided by residues 276 to 278 (VGV) and 283 to 289 (GGAGLGR). 1D-myo-inositol 2-(L-cysteinylamino)-2-deoxy-alpha-D-glucopyranoside is bound at residue Y310. 315 to 320 (NVRAVR) serves as a coordination point for acetyl-CoA.

The protein belongs to the acetyltransferase family. MshD subfamily. In terms of assembly, monomer.

The catalysed reaction is 1D-myo-inositol 2-(L-cysteinylamino)-2-deoxy-alpha-D-glucopyranoside + acetyl-CoA = mycothiol + CoA + H(+). Functionally, catalyzes the transfer of acetyl from acetyl-CoA to desacetylmycothiol (Cys-GlcN-Ins) to form mycothiol. The sequence is that of Mycothiol acetyltransferase from Frankia casuarinae (strain DSM 45818 / CECT 9043 / HFP020203 / CcI3).